A 325-amino-acid polypeptide reads, in one-letter code: tRNA N6-adenosine threonylcarbamoyltransferase (325 aa).

Fe cation contacts are provided by His-107, His-111, and Tyr-127. Substrate is bound by residues 127 to 131 (YVSGG), Asp-159, Gly-172, Glu-176, and Asn-257. Asp-285 is a Fe cation binding site.

This sequence belongs to the KAE1 / TsaD family. As to quaternary structure, monomer. Component of the KEOPS complex that consists of Kae1, Bud32, Cgi121 and Pcc1; the whole complex dimerizes. Requires Fe(2+) as cofactor.

It localises to the cytoplasm. The catalysed reaction is L-threonylcarbamoyladenylate + adenosine(37) in tRNA = N(6)-L-threonylcarbamoyladenosine(37) in tRNA + AMP + H(+). Functionally, required for the formation of a threonylcarbamoyl group on adenosine at position 37 (t(6)A37) in tRNAs that read codons beginning with adenine. Is a component of the KEOPS complex that is probably involved in the transfer of the threonylcarbamoyl moiety of threonylcarbamoyl-AMP (TC-AMP) to the N6 group of A37. Kae1 likely plays a direct catalytic role in this reaction, but requires other protein(s) of the complex to fulfill this activity. This Thermococcus gammatolerans (strain DSM 15229 / JCM 11827 / EJ3) protein is tRNA N6-adenosine threonylcarbamoyltransferase.